Consider the following 134-residue polypeptide: uncharacterized protein (134 aa).

The segment at 1–30 (MGTLQGAALRSRERPSWPQETHGHRERTEE) is disordered. Basic and acidic residues predominate over residues 10–30 (RSRERPSWPQETHGHRERTEE).

This is an uncharacterized protein from Homo sapiens (Human).